The chain runs to 709 residues: Polyribonucleotide nucleotidyltransferase (709 aa).

The Mg(2+) site is built by aspartate 487 and aspartate 493. The KH domain maps to 554–613 (PRIHTMKISSDKIKDVIGKGGAVIRALCEETGTTIEIEDDGTIKIAATEGAAAKEAIRRI). Residues 623-691 (GKIYTGKVMR…RQGRIRLSIK (69 aa)) form the S1 motif domain.

The protein belongs to the polyribonucleotide nucleotidyltransferase family. In terms of assembly, component of the RNA degradosome, which is a multiprotein complex involved in RNA processing and mRNA degradation. Requires Mg(2+) as cofactor.

It is found in the cytoplasm. The catalysed reaction is RNA(n+1) + phosphate = RNA(n) + a ribonucleoside 5'-diphosphate. Functionally, involved in mRNA degradation. Catalyzes the phosphorolysis of single-stranded polyribonucleotides processively in the 3'- to 5'-direction. The chain is Polyribonucleotide nucleotidyltransferase from Aliivibrio fischeri (strain ATCC 700601 / ES114) (Vibrio fischeri).